A 290-amino-acid polypeptide reads, in one-letter code: ATP synthase gamma chain (290 aa).

The protein belongs to the ATPase gamma chain family. As to quaternary structure, F-type ATPases have 2 components, CF(1) - the catalytic core - and CF(0) - the membrane proton channel. CF(1) has five subunits: alpha(3), beta(3), gamma(1), delta(1), epsilon(1). CF(0) has three main subunits: a, b and c.

The protein localises to the cell inner membrane. Functionally, produces ATP from ADP in the presence of a proton gradient across the membrane. The gamma chain is believed to be important in regulating ATPase activity and the flow of protons through the CF(0) complex. This is ATP synthase gamma chain from Dictyoglomus thermophilum (strain ATCC 35947 / DSM 3960 / H-6-12).